Consider the following 234-residue polypeptide: Leucyl/phenylalanyl-tRNA--protein transferase (234 aa).

This sequence belongs to the L/F-transferase family.

Its subcellular location is the cytoplasm. The enzyme catalyses N-terminal L-lysyl-[protein] + L-leucyl-tRNA(Leu) = N-terminal L-leucyl-L-lysyl-[protein] + tRNA(Leu) + H(+). The catalysed reaction is N-terminal L-arginyl-[protein] + L-leucyl-tRNA(Leu) = N-terminal L-leucyl-L-arginyl-[protein] + tRNA(Leu) + H(+). It carries out the reaction L-phenylalanyl-tRNA(Phe) + an N-terminal L-alpha-aminoacyl-[protein] = an N-terminal L-phenylalanyl-L-alpha-aminoacyl-[protein] + tRNA(Phe). Functionally, functions in the N-end rule pathway of protein degradation where it conjugates Leu, Phe and, less efficiently, Met from aminoacyl-tRNAs to the N-termini of proteins containing an N-terminal arginine or lysine. The chain is Leucyl/phenylalanyl-tRNA--protein transferase from Escherichia coli O7:K1 (strain IAI39 / ExPEC).